Here is a 611-residue protein sequence, read N- to C-terminus: Threonine--tRNA ligase (611 aa).

The tract at residues 1–27 (MAGPEPEPVSSAAATTPAPSAPVVLPK) is disordered. Over residues 8-24 (PVSSAAATTPAPSAPVV) the composition is skewed to low complexity. Residues 209 to 502 (DHRRIGKDLD…MTENYAGDYP (294 aa)) are catalytic. C302, H353, and H479 together coordinate Zn(2+).

Belongs to the class-II aminoacyl-tRNA synthetase family. In terms of assembly, homodimer. Zn(2+) serves as cofactor.

It is found in the cytoplasm. The catalysed reaction is tRNA(Thr) + L-threonine + ATP = L-threonyl-tRNA(Thr) + AMP + diphosphate + H(+). Its function is as follows. Catalyzes the attachment of threonine to tRNA(Thr) in a two-step reaction: L-threonine is first activated by ATP to form Thr-AMP and then transferred to the acceptor end of tRNA(Thr). Also edits incorrectly charged L-seryl-tRNA(Thr). This Synechococcus sp. (strain CC9605) protein is Threonine--tRNA ligase.